The chain runs to 93 residues: UPF0223 protein SAG0995 (93 aa).

The protein belongs to the UPF0223 family.

This is UPF0223 protein SAG0995 from Streptococcus agalactiae serotype V (strain ATCC BAA-611 / 2603 V/R).